An 89-amino-acid chain; its full sequence is Large ribosomal subunit protein uL23c (89 aa).

It belongs to the universal ribosomal protein uL23 family. As to quaternary structure, part of the 50S ribosomal subunit.

It is found in the plastid. The protein resides in the chloroplast. In terms of biological role, binds to 23S rRNA. The sequence is that of Large ribosomal subunit protein uL23c (rpl23) from Staurastrum punctulatum (Green alga).